The following is a 471-amino-acid chain: Protoporphyrinogen oxidase (471 aa).

Residues 16-21, 39-40, alanine 47, 61-64, valine 251, tryptophan 408, and 446-448 contribute to the FAD site; these read GGGISG, ES, GPNS, and VGL.

Belongs to the protoporphyrinogen/coproporphyrinogen oxidase family. Protoporphyrinogen oxidase subfamily. In terms of assembly, monomer. Homodimer. The cofactor is FAD.

Its subcellular location is the cytoplasm. The protein resides in the cell membrane. The catalysed reaction is protoporphyrinogen IX + 3 O2 = protoporphyrin IX + 3 H2O2. The protein operates within porphyrin-containing compound metabolism; protoporphyrin-IX biosynthesis; protoporphyrin-IX from protoporphyrinogen-IX: step 1/1. Its activity is regulated as follows. Strongly inhibited by acifluorfen. Functionally, catalyzes the 6-electron oxidation of protoporphyrinogen-IX to form protoporphyrin-IX. Does not oxidize coproporphyrinogen III. Involved in the classical protoporphyrin-dependent (PPD) heme b biosynthesis. This is Protoporphyrinogen oxidase from Myxococcus xanthus.